The chain runs to 366 residues: Ribosomal RNA large subunit methyltransferase M (366 aa).

S-adenosyl-L-methionine-binding positions include Ser188, 221-224, Asp240, Asp260, and Asp277; that span reads CPGG. Lys306 functions as the Proton acceptor in the catalytic mechanism.

This sequence belongs to the class I-like SAM-binding methyltransferase superfamily. RNA methyltransferase RlmE family. RlmM subfamily. In terms of assembly, monomer.

The protein resides in the cytoplasm. The catalysed reaction is cytidine(2498) in 23S rRNA + S-adenosyl-L-methionine = 2'-O-methylcytidine(2498) in 23S rRNA + S-adenosyl-L-homocysteine + H(+). Functionally, catalyzes the 2'-O-methylation at nucleotide C2498 in 23S rRNA. The polypeptide is Ribosomal RNA large subunit methyltransferase M (Pectobacterium atrosepticum (strain SCRI 1043 / ATCC BAA-672) (Erwinia carotovora subsp. atroseptica)).